The primary structure comprises 538 residues: Tetracenomycin C resistance and export protein (538 aa).

The next 14 helical transmembrane spans lie at Leu-28 to Ala-48, Trp-65 to Gly-85, Gly-100 to Phe-120, Leu-126 to Gly-146, Ile-154 to Val-174, Ala-181 to Leu-201, Phe-213 to Ile-233, Gly-239 to Phe-259, Val-286 to Leu-306, Val-319 to Ile-339, Phe-342 to Met-362, Met-371 to Gly-391, Gln-413 to Ser-433, and Met-494 to Phe-514.

Belongs to the major facilitator superfamily. EmrB family.

It is found in the cell membrane. The protein operates within antibiotic biosynthesis; tetracenomycin C biosynthesis. Its function is as follows. Resistance to tetracenomycin C by an active tetracenomycin C efflux system which is probably energized by transmembrane electrochemical gradients. The chain is Tetracenomycin C resistance and export protein (tcmA) from Streptomyces glaucescens.